The sequence spans 356 residues: Calcium/calmodulin-dependent protein kinase type 1 (356 aa).

Positions 2–7 (PLFKRR) match the Nuclear localization signal motif. The 257-residue stretch at 22 to 278 (YDFRDVLGTG…CQSALEHPWI (257 aa)) folds into the Protein kinase domain. ATP-binding positions include 28–36 (LGTGAFSKV) and lysine 52. Residue aspartate 144 is the Proton acceptor of the active site. A Phosphothreonine; by ckk-1 modification is found at threonine 179. Residues 278-318 (ISGNTAYTHDIHRTVAVHLKKSLAKRNWKKAFNAAAAIRQL) form an autoinhibitory domain region. The calmodulin-binding stretch occupies residues 298 to 319 (KSLAKRNWKKAFNAAAAIRQLQ).

Belongs to the protein kinase superfamily. CAMK Ser/Thr protein kinase family. CaMK subfamily. Mg(2+) serves as cofactor.

Its subcellular location is the nucleus. It is found in the cytoplasm. It catalyses the reaction L-seryl-[protein] + ATP = O-phospho-L-seryl-[protein] + ADP + H(+). It carries out the reaction L-threonyl-[protein] + ATP = O-phospho-L-threonyl-[protein] + ADP + H(+). With respect to regulation, activated by Ca(2+)/calmodulin. Binding of calmodulin results in a conformational change that generates functional binding sites for both substrate and ATP, and thus relieves autoinhibition and lowers the Km of substrate binding. Must be phosphorylated by ckk-1 to be maximally active but this does not appear to be required for activity in AFD neurons. In terms of biological role, calcium/calmodulin-dependent protein kinase that operates in the calcium-triggered CaMKK-CaMK1 signaling cascade which results in transcriptional activation. Transcriptional activation occurs at least in part through phosphorylation of crh-1. Regulates gene expression, sensory morphology, and function of the AFD thermosensory neurons. Involved in long-term adaptation of AFD neurons to temperatures warmer than the initial acclimatized cultivation temperature. Acts in the FLP thermal nociceptors to moderate the responsiveness to noxious heat and controls neuropeptide release from FLP neurons in response to temperature elevations. Regulates the dauer decision, the decision of the larvae to enter into the alternative stress-resistant and long-lived dauer developmental stage, based on the feeding state, primarily in the AWC sensory neurons. Acts non cell-autonomously in the AWC neurons to regulate expression of the daf-28 insulin-like peptide and cell-autonomously in the ASI sensory neurons to regulate expression of the growth promoting daf-7 in a food-regulated manner. Plays a role in memory-based thermal response of an individual AFD neuron cell. Involved in chemotaxis response in AWC neurons to attractant 2-heptanone, a volatile organic compound emitted by the nematode pathogenic bacterium B.nematocida B16. Represses transcription of glutamate receptor glr-1 in the nucleus basally and in response to change in synaptic activity. This is Calcium/calmodulin-dependent protein kinase type 1 (cmk-1) from Caenorhabditis briggsae.